Consider the following 329-residue polypeptide: Neuropeptides B/W receptor type 1 (329 aa).

At 1–43 (MHNLTLFESGGDNVSCGGSSLGCPNGSSLAPLPLPQPLAVAVP) the chain is on the extracellular side. Residues N3, N13, and N25 are each glycosylated (N-linked (GlcNAc...) asparagine). Residues 44–64 (VVYGVICAVGLAGNSAVLYVL) traverse the membrane as a helical segment. The Cytoplasmic segment spans residues 65-75 (LRTPRMKTVTN). Residues 76-96 (VFILNLAIADELFTLVLPINI) traverse the membrane as a helical segment. Over 97 to 112 (ADFLLRRWPFGEVMCK) the chain is Extracellular. C111 and C190 are joined by a disulfide. Residues 113-133 (LIVAVDQYNTFSSLYFLAVMS) traverse the membrane as a helical segment. The Cytoplasmic portion of the chain corresponds to 134–158 (ADRYLVVLATAESRRVSGRTYGAAR). The chain crosses the membrane as a helical span at residues 159–179 (AVSLAVWALVTLVVLPFAVFA). Over 180–209 (RLDEEQGRRQCVLVFPQPEAFWWRASRLYT) the chain is Extracellular. Residues 210–230 (LVLGFAIPVTTICALYTTLLC) form a helical membrane-spanning segment. At 231–250 (RLRAIQLDSHAKALDRAKKR) the chain is on the cytoplasmic side. Residues 251 to 271 (VTLLVAAILAVCLLCWTPYHL) traverse the membrane as a helical segment. The Extracellular segment spans residues 272–289 (STIVALTTDLPQTPLVIG). Residues 290–312 (ISYFITSLSYANSCLNPFLYAFL) traverse the membrane as a helical segment. Over 313-329 (DDSFRRSLRQLVSCRSA) the chain is Cytoplasmic.

The protein belongs to the G-protein coupled receptor 1 family.

Its subcellular location is the cell membrane. In terms of biological role, interacts specifically with a number of opioid ligands. Receptor for neuropeptides B and W, which may be involved in neuroendocrine system regulation, food intake and the organization of other signals. This chain is Neuropeptides B/W receptor type 1 (Npbwr1), found in Mus musculus (Mouse).